The following is a 135-amino-acid chain: Putative nickel-responsive regulator (135 aa).

Ni(2+)-binding residues include His-79, His-90, His-92, and Cys-98.

It belongs to the transcriptional regulatory CopG/NikR family. The cofactor is Ni(2+).

Its function is as follows. Transcriptional regulator. In Dictyoglomus thermophilum (strain ATCC 35947 / DSM 3960 / H-6-12), this protein is Putative nickel-responsive regulator.